The following is a 559-amino-acid chain: Glycerol kinase (559 aa).

Residue T20 coordinates ADP. T20, S21, and S22 together coordinate ATP. Residue T20 coordinates sn-glycerol 3-phosphate. R24 is a binding site for ADP. Positions 94, 95, and 148 each coordinate sn-glycerol 3-phosphate. R94, E95, and Y148 together coordinate glycerol. Residue G252 participates in beta-D-fructose 1,6-bisphosphate binding. D265 is a binding site for sn-glycerol 3-phosphate. 2 residues coordinate glycerol: D265 and Q266. Positions 287, 332, 433, and 437 each coordinate ADP. Residues T287, G332, and G433 each contribute to the ATP site. E501 contributes to the Zn(2+) binding site. The chain crosses the membrane as a helical span at residues 532–552; the sequence is IFCSLPLGFFIVSSMVMLIGA.

The protein belongs to the FGGY kinase family.

Its subcellular location is the mitochondrion outer membrane. The protein localises to the nucleus. It localises to the cytoplasm. The protein resides in the cytosol. It catalyses the reaction glycerol + ATP = sn-glycerol 3-phosphate + ADP + H(+). It participates in polyol metabolism; glycerol degradation via glycerol kinase pathway; sn-glycerol 3-phosphate from glycerol: step 1/1. Functionally, kinase that plays a key role in glycerol metabolism, catalyzing its phosphorylation to produce sn-glycerol 3-phosphate. Sn-glycerol 3-phosphate is a crucial intermediate in various metabolic pathways, such as the synthesis of glycerolipids and triglycerides, glycogenesis, glycolysis and gluconeogenesis. The sequence is that of Glycerol kinase from Rattus norvegicus (Rat).